Here is a 434-residue protein sequence, read N- to C-terminus: 3-phosphoshikimate 1-carboxyvinyltransferase (434 aa).

Residues lysine 22, serine 23, and arginine 27 each contribute to the 3-phosphoshikimate site. Lysine 22 lines the phosphoenolpyruvate pocket. 2 residues coordinate phosphoenolpyruvate: glycine 93 and arginine 121. Residues serine 168, serine 169, glutamine 170, serine 199, aspartate 320, and lysine 347 each contribute to the 3-phosphoshikimate site. Glutamine 170 is a binding site for phosphoenolpyruvate. Aspartate 320 serves as the catalytic Proton acceptor. Phosphoenolpyruvate contacts are provided by arginine 351, arginine 394, and lysine 419.

It belongs to the EPSP synthase family. As to quaternary structure, monomer.

It is found in the cytoplasm. It catalyses the reaction 3-phosphoshikimate + phosphoenolpyruvate = 5-O-(1-carboxyvinyl)-3-phosphoshikimate + phosphate. It participates in metabolic intermediate biosynthesis; chorismate biosynthesis; chorismate from D-erythrose 4-phosphate and phosphoenolpyruvate: step 6/7. Its function is as follows. Catalyzes the transfer of the enolpyruvyl moiety of phosphoenolpyruvate (PEP) to the 5-hydroxyl of shikimate-3-phosphate (S3P) to produce enolpyruvyl shikimate-3-phosphate and inorganic phosphate. This is 3-phosphoshikimate 1-carboxyvinyltransferase from Paraburkholderia phytofirmans (strain DSM 17436 / LMG 22146 / PsJN) (Burkholderia phytofirmans).